The chain runs to 314 residues: Ribose-phosphate pyrophosphokinase (314 aa).

Residues 37–39 (DGE) and 96–97 (RQ) contribute to the ATP site. Mg(2+)-binding residues include His131 and Asp170. The active site involves Lys194. D-ribose 5-phosphate-binding positions include Arg196, Asp220, and 224–228 (DTGGT).

The protein belongs to the ribose-phosphate pyrophosphokinase family. Class I subfamily. As to quaternary structure, homohexamer. Mg(2+) is required as a cofactor.

Its subcellular location is the cytoplasm. It carries out the reaction D-ribose 5-phosphate + ATP = 5-phospho-alpha-D-ribose 1-diphosphate + AMP + H(+). Its pathway is metabolic intermediate biosynthesis; 5-phospho-alpha-D-ribose 1-diphosphate biosynthesis; 5-phospho-alpha-D-ribose 1-diphosphate from D-ribose 5-phosphate (route I): step 1/1. In terms of biological role, involved in the biosynthesis of the central metabolite phospho-alpha-D-ribosyl-1-pyrophosphate (PRPP) via the transfer of pyrophosphoryl group from ATP to 1-hydroxyl of ribose-5-phosphate (Rib-5-P). The chain is Ribose-phosphate pyrophosphokinase from Vibrio vulnificus (strain CMCP6).